Consider the following 482-residue polypeptide: Glutamate--tRNA ligase (482 aa).

Positions Pro-9–Gly-19 match the 'HIGH' region motif. A 'KMSKS' region motif is present at residues Lys-252–Arg-256. Residue Lys-255 participates in ATP binding.

It belongs to the class-I aminoacyl-tRNA synthetase family. Glutamate--tRNA ligase type 1 subfamily. In terms of assembly, monomer.

The protein resides in the cytoplasm. The catalysed reaction is tRNA(Glu) + L-glutamate + ATP = L-glutamyl-tRNA(Glu) + AMP + diphosphate. In terms of biological role, catalyzes the attachment of glutamate to tRNA(Glu) in a two-step reaction: glutamate is first activated by ATP to form Glu-AMP and then transferred to the acceptor end of tRNA(Glu). This Ureaplasma urealyticum serovar 10 (strain ATCC 33699 / Western) protein is Glutamate--tRNA ligase.